Reading from the N-terminus, the 114-residue chain is Large ribosomal subunit protein bL17 (114 aa).

It belongs to the bacterial ribosomal protein bL17 family. As to quaternary structure, part of the 50S ribosomal subunit. Contacts protein L32.

In Clostridium acetobutylicum (strain ATCC 824 / DSM 792 / JCM 1419 / IAM 19013 / LMG 5710 / NBRC 13948 / NRRL B-527 / VKM B-1787 / 2291 / W), this protein is Large ribosomal subunit protein bL17.